Consider the following 895-residue polypeptide: Protein translocase subunit SecA (895 aa).

ATP is bound by residues Q86, G104–T108, and D494. Composition is skewed to low complexity over residues A838–P849 and G870–R882. The segment at A838–V895 is disordered.

This sequence belongs to the SecA family. In terms of assembly, monomer and homodimer. Part of the essential Sec protein translocation apparatus which comprises SecA, SecYEG and auxiliary proteins SecDF. Other proteins may also be involved.

It localises to the cell membrane. The protein resides in the cytoplasm. It catalyses the reaction ATP + H2O + cellular proteinSide 1 = ADP + phosphate + cellular proteinSide 2.. Functionally, part of the Sec protein translocase complex. Interacts with the SecYEG preprotein conducting channel. Has a central role in coupling the hydrolysis of ATP to the transfer of proteins into and across the cell membrane, serving as an ATP-driven molecular motor driving the stepwise translocation of polypeptide chains across the membrane. The chain is Protein translocase subunit SecA from Kineococcus radiotolerans (strain ATCC BAA-149 / DSM 14245 / SRS30216).